Consider the following 296-residue polypeptide: 4-hydroxybenzoate octaprenyltransferase (296 aa).

The next 8 membrane-spanning stretches (helical) occupy residues 28–48 (PIGIYLLLWPTLVAVWIAGNG), 55–75 (VLIFALGVVLMRAAGCCINDF), 102–122 (AVMLFALLVGVSFLLVLCTNA), 145–167 (TYYPQVVLGAAYSWGIPMAFTAA), 174–196 (SAWLLYIANLLWTVGYDTYYAMV), 219–239 (VIILTLQLLSLGCLLLAGNRF), 241–261 (LGGWYHLGLLAAAACFAWEFW), and 275–295 (FLHNHWAGMLIFIGVVLDYAL).

This sequence belongs to the UbiA prenyltransferase family. The cofactor is Mg(2+).

Its subcellular location is the cell inner membrane. It catalyses the reaction all-trans-octaprenyl diphosphate + 4-hydroxybenzoate = 4-hydroxy-3-(all-trans-octaprenyl)benzoate + diphosphate. It functions in the pathway cofactor biosynthesis; ubiquinone biosynthesis. Functionally, catalyzes the prenylation of para-hydroxybenzoate (PHB) with an all-trans polyprenyl group. Mediates the second step in the final reaction sequence of ubiquinone-8 (UQ-8) biosynthesis, which is the condensation of the polyisoprenoid side chain with PHB, generating the first membrane-bound Q intermediate 3-octaprenyl-4-hydroxybenzoate. The polypeptide is 4-hydroxybenzoate octaprenyltransferase (Pseudomonas entomophila (strain L48)).